Here is a 610-residue protein sequence, read N- to C-terminus: Glutamine--fructose-6-phosphate aminotransferase [isomerizing] (610 aa).

C2 serves as the catalytic Nucleophile; for GATase activity. Residues 2-218 form the Glutamine amidotransferase type-2 domain; that stretch reads CGIVGAVAQR…EGDVAEITRR (217 aa). 2 SIS domains span residues 286–426 and 459–600; these read AADI…EQGR and LATD…VDQP. Residue K605 is the For Fru-6P isomerization activity of the active site.

In terms of assembly, homodimer.

It localises to the cytoplasm. It catalyses the reaction D-fructose 6-phosphate + L-glutamine = D-glucosamine 6-phosphate + L-glutamate. Catalyzes the first step in hexosamine metabolism, converting fructose-6P into glucosamine-6P using glutamine as a nitrogen source. This chain is Glutamine--fructose-6-phosphate aminotransferase [isomerizing], found in Vibrio parahaemolyticus serotype O3:K6 (strain RIMD 2210633).